Here is a 578-residue protein sequence, read N- to C-terminus: Laccase-10 (578 aa).

Residues 1–29 (MGARCLALLLLYGTLLLLLLLPQLPLAGA) form the signal peptide. Plastocyanin-like domains are found at residues 37-153 (NVKL…PKAG) and 163-319 (KDVP…YAPP). N-linked (GlcNAc...) asparagine glycans are attached at residues asparagine 42 and asparagine 83. Cu cation contacts are provided by histidine 87 and histidine 89. The N-linked (GlcNAc...) asparagine glycan is linked to asparagine 119. Cu cation is bound by residues histidine 132 and histidine 134. Residues asparagine 192, asparagine 208, asparagine 244, asparagine 307, asparagine 336, asparagine 384, asparagine 392, asparagine 402, asparagine 438, asparagine 445, asparagine 448, asparagine 451, and asparagine 461 are each glycosylated (N-linked (GlcNAc...) asparagine). The region spanning 428 to 562 (DFPASPLEPF…KMAWVVNDGP (135 aa)) is the Plastocyanin-like 3 domain. Residues histidine 479, histidine 482, histidine 484, histidine 541, cysteine 542, histidine 543, and histidine 547 each coordinate Cu cation.

The protein belongs to the multicopper oxidase family. It depends on Cu cation as a cofactor.

The protein resides in the secreted. It is found in the extracellular space. It localises to the apoplast. It catalyses the reaction 4 hydroquinone + O2 = 4 benzosemiquinone + 2 H2O. Lignin degradation and detoxification of lignin-derived products. This Oryza sativa subsp. japonica (Rice) protein is Laccase-10 (LAC10).